A 129-amino-acid chain; its full sequence is MGKAKAERRLKDNEAQAVARTIRVSPQKLNLVAALIRGKKVDRALAELEFSRKRIAGTVRKTLESAIANAENNHDLDVDSLIVAEAFVGKSIVMKRFHARGRGRASRVEKPFAHLTIVVREVEAKGEAA.

This sequence belongs to the universal ribosomal protein uL22 family. Part of the 50S ribosomal subunit.

Functionally, this protein binds specifically to 23S rRNA; its binding is stimulated by other ribosomal proteins, e.g. L4, L17, and L20. It is important during the early stages of 50S assembly. It makes multiple contacts with different domains of the 23S rRNA in the assembled 50S subunit and ribosome. The globular domain of the protein is located near the polypeptide exit tunnel on the outside of the subunit, while an extended beta-hairpin is found that lines the wall of the exit tunnel in the center of the 70S ribosome. This Sinorhizobium medicae (strain WSM419) (Ensifer medicae) protein is Large ribosomal subunit protein uL22.